Reading from the N-terminus, the 118-residue chain is UPF0344 protein RBAM_010920 (118 aa).

4 helical membrane passes run 4-24 (WHIT…GLYG), 33-53 (ITHM…AELF), 62-82 (EYAG…MLVI), and 93-113 (LWIG…HLPI).

Belongs to the UPF0344 family.

Its subcellular location is the cell membrane. The protein is UPF0344 protein RBAM_010920 of Bacillus velezensis (strain DSM 23117 / BGSC 10A6 / LMG 26770 / FZB42) (Bacillus amyloliquefaciens subsp. plantarum).